A 223-amino-acid chain; its full sequence is FAD-dependent monooxygenase imqC (223 aa).

Residues 139 to 141 (RFY), Y189, and D210 contribute to the FAD site.

The protein belongs to the PheA/TfdB FAD monooxygenase family.

The protein operates within secondary metabolite biosynthesis. In terms of biological role, FAD-dependent monooxygenase; part of the gene cluster that mediates the biosynthesis of imizoquins A to D, tripeptide-derived alkaloids that serve a protective role against oxidative stress that are essential for normal germination. ImqB is a canonical three-module NRPS that assembles the tripeptide backbone of the imizoquins via condensation of Trp, Tyr, and Leu-derived precursors. N-methylation by imqF and phenol oxidation by imqC, followed by cyclization via the FAD-dependent oxidase imqH carry out the three-step transformation of L-tyrosine into tetrahydroisoquinoline. Importantly, this sequence requires the presence of a free amine in the tyrosine moiety, indicating that isoquinoline formation occurs prior to peptide bond formation. The imidazolidin-4-one ring of imizoquins could form following additional oxidation of the methyl-derived bridgehead carbon by imqH. Lastly, O-methylation by imqG and leucine hydroxylation by imqE complete biosynthesis of the imizoquins. This Aspergillus flavus (strain ATCC 200026 / FGSC A1120 / IAM 13836 / NRRL 3357 / JCM 12722 / SRRC 167) protein is FAD-dependent monooxygenase imqC.